The following is a 452-amino-acid chain: Glutamyl-tRNA(Gln) amidotransferase subunit A (452 aa).

Catalysis depends on charge relay system residues Lys56 and Ser131. Ser155 (acyl-ester intermediate) is an active-site residue.

This sequence belongs to the amidase family. GatA subfamily. In terms of assembly, heterotrimer of A, B and C subunits.

It carries out the reaction L-glutamyl-tRNA(Gln) + L-glutamine + ATP + H2O = L-glutaminyl-tRNA(Gln) + L-glutamate + ADP + phosphate + H(+). Allows the formation of correctly charged Gln-tRNA(Gln) through the transamidation of misacylated Glu-tRNA(Gln) in organisms which lack glutaminyl-tRNA synthetase. The reaction takes place in the presence of glutamine and ATP through an activated gamma-phospho-Glu-tRNA(Gln). This Campylobacter hominis (strain ATCC BAA-381 / DSM 21671 / CCUG 45161 / LMG 19568 / NCTC 13146 / CH001A) protein is Glutamyl-tRNA(Gln) amidotransferase subunit A.